A 283-amino-acid chain; its full sequence is Coiled-coil domain-containing protein 107 (283 aa).

The N-terminal stretch at 1–24 is a signal peptide; sequence MAGAVSLLGVVGLLLVSALSGVLG. A disordered region spans residues 30 to 62; that stretch reads DLRAHPGNAAHPGSGATEPRRRPPLKDQRERTR. Positions 47–62 are enriched in basic and acidic residues; that stretch reads EPRRRPPLKDQRERTR. The helical transmembrane segment at 65–85 threads the bilayer; the sequence is SLPLGALYTAAVAAFVLYKCL. A coiled-coil region spans residues 104-134; sequence LQSEQQLAQLTQQLAQTEQHLNNLMAQLDPL. 2 disordered regions span residues 164 to 207 and 258 to 283; these read KPDK…SRPL and AKGP…SLFS. The segment covering 176-187 has biased composition (gly residues); that stretch reads EGSGGESAGGGD.

The protein localises to the membrane. The polypeptide is Coiled-coil domain-containing protein 107 (CCDC107) (Homo sapiens (Human)).